A 572-amino-acid chain; its full sequence is Sulfate adenylyltransferase (572 aa).

Positions 1–169 (MANTPHGGVL…IQAINKLNHY (169 aa)) are N-terminal. A catalytic region spans residues 170–394 (DYVGLRYTPA…LRESHPPRAK (225 aa)). Glutamine 197 is a binding site for sulfate. Residues 197-200 (QTRN) and 291-294 (GRDH) each bind ATP. Catalysis depends on residues threonine 198, arginine 199, and asparagine 200. Arginine 199 is a binding site for sulfate. Residue alanine 295 participates in sulfate binding. Methionine 333 serves as a coordination point for ATP. The allosteric regulation domain; adenylyl-sulfate kinase-like stretch occupies residues 395–572 (QGFTIFLTGH…LLESQGFFGN (178 aa)). 3'-phosphoadenylyl sulfate contacts are provided by residues 434–437 (ETVR), arginine 451, 477–478 (IA), and lysine 515.

In the N-terminal section; belongs to the sulfate adenylyltransferase family. The protein in the C-terminal section; belongs to the APS kinase family. In terms of assembly, homohexamer. Dimer of trimers.

It localises to the cytoplasm. The enzyme catalyses sulfate + ATP + H(+) = adenosine 5'-phosphosulfate + diphosphate. Its pathway is sulfur metabolism; hydrogen sulfide biosynthesis; sulfite from sulfate: step 1/3. With respect to regulation, allosterically inhibited by 3'-phosphoadenosine 5'-phosphosulfate (PAPS). Its function is as follows. Catalyzes the first intracellular reaction of sulfate assimilation, forming adenosine-5'-phosphosulfate (APS) from inorganic sulfate and ATP. Plays an important role in sulfate activation as a component of the biosynthesis pathway of sulfur-containing amino acids. The polypeptide is Sulfate adenylyltransferase (Yarrowia lipolytica (strain CLIB 122 / E 150) (Yeast)).